The primary structure comprises 89 residues: Small ribosomal subunit protein uS15 (89 aa).

It belongs to the universal ribosomal protein uS15 family. In terms of assembly, part of the 30S ribosomal subunit. Forms a bridge to the 50S subunit in the 70S ribosome, contacting the 23S rRNA.

In terms of biological role, one of the primary rRNA binding proteins, it binds directly to 16S rRNA where it helps nucleate assembly of the platform of the 30S subunit by binding and bridging several RNA helices of the 16S rRNA. Its function is as follows. Forms an intersubunit bridge (bridge B4) with the 23S rRNA of the 50S subunit in the ribosome. This chain is Small ribosomal subunit protein uS15, found in Chlorobium chlorochromatii (strain CaD3).